The following is a 173-amino-acid chain: Adenine phosphoribosyltransferase (173 aa).

The protein belongs to the purine/pyrimidine phosphoribosyltransferase family. In terms of assembly, homodimer.

It localises to the cytoplasm. It catalyses the reaction AMP + diphosphate = 5-phospho-alpha-D-ribose 1-diphosphate + adenine. Its pathway is purine metabolism; AMP biosynthesis via salvage pathway; AMP from adenine: step 1/1. Functionally, catalyzes a salvage reaction resulting in the formation of AMP, that is energically less costly than de novo synthesis. The chain is Adenine phosphoribosyltransferase from Ureaplasma parvum serovar 3 (strain ATCC 27815 / 27 / NCTC 11736).